The primary structure comprises 122 residues: Large ribosomal subunit protein uL14 (122 aa).

The protein belongs to the universal ribosomal protein uL14 family. In terms of assembly, part of the 50S ribosomal subunit. Forms a cluster with proteins L3 and L19. In the 70S ribosome, L14 and L19 interact and together make contacts with the 16S rRNA in bridges B5 and B8.

Binds to 23S rRNA. Forms part of two intersubunit bridges in the 70S ribosome. This Hahella chejuensis (strain KCTC 2396) protein is Large ribosomal subunit protein uL14.